Reading from the N-terminus, the 147-residue chain is D-aminoacyl-tRNA deacylase (147 aa).

The Gly-cisPro motif, important for rejection of L-amino acids signature appears at 136–137 (GP).

It belongs to the DTD family. As to quaternary structure, homodimer.

It localises to the cytoplasm. It catalyses the reaction glycyl-tRNA(Ala) + H2O = tRNA(Ala) + glycine + H(+). The catalysed reaction is a D-aminoacyl-tRNA + H2O = a tRNA + a D-alpha-amino acid + H(+). Its function is as follows. An aminoacyl-tRNA editing enzyme that deacylates mischarged D-aminoacyl-tRNAs. Also deacylates mischarged glycyl-tRNA(Ala), protecting cells against glycine mischarging by AlaRS. Acts via tRNA-based rather than protein-based catalysis; rejects L-amino acids rather than detecting D-amino acids in the active site. By recycling D-aminoacyl-tRNA to D-amino acids and free tRNA molecules, this enzyme counteracts the toxicity associated with the formation of D-aminoacyl-tRNA entities in vivo and helps enforce protein L-homochirality. The chain is D-aminoacyl-tRNA deacylase from Persephonella marina (strain DSM 14350 / EX-H1).